A 393-amino-acid chain; its full sequence is Iripin-3 (393 aa).

Positions 1–16 are cleaved as a signal peptide; the sequence is MKVITAFLSVFVLCSA. N-linked (GlcNAc...) asparagine glycans are attached at residues N104 and N265.

It belongs to the serpin family. Interacts with human KLKB1. Interacts with human ST14. Interacts with human F2 (thrombin). As to expression, saliva (at protein level). Expressed in salivary gland. Expressed in ovary during blood feeding.

The protein resides in the secreted. Serine protease inhibitor that modulates blood feeding of ticks on vertebrate species. Moderately inhibits host plasma kallikrein (KLKB1), matriptase (ST14), trypsin, plasmin (PLG), thrombin (F2) and coagulation factor VIIa (F7). Slightly inhibits host alpha-chymotrypsin, tPA/tissue-type plasminogen activator (PLAT), uPA/urokinase-type plasminogen activator (PLAU) and coagulation factor XIIa (F12). Slightly inhibits the extrinsic pathway while not affecting the intrinsic and common pathways of host blood coagulation. Decreases synthesis and secretion of IL6 by mouse bone marrow-derived macrophages. Decreases viability of mouse B- and T-cells. Decreases proliferation of mouse CD4+ T-cells in response to stimulation. Inhibits Th1 immune responses in mouse cells. Promotes differentiation of mouse regulatory T-cells. The sequence is that of Iripin-3 from Ixodes ricinus (Common tick).